The following is a 191-amino-acid chain: GDP-mannose pyrophosphatase (191 aa).

GDP-alpha-D-mannose contacts are provided by residues Y17, 38–40 (KRE), R67, and 85–87 (AGL). Positions 43–180 (DRGNGATILL…EIRDGKTVLL (138 aa)) constitute a Nudix hydrolase domain. Positions 85, 100, and 104 each coordinate Mg(2+). The short motif at 86–106 (GLLDNDEPEVCIRKEAIEETG) is the Nudix box element. GDP-alpha-D-mannose contacts are provided by residues E104, E127, 150 to 151 (DE), and K176. Position 151 (E151) interacts with Mg(2+).

It belongs to the Nudix hydrolase family. NudK subfamily. As to quaternary structure, homodimer. It depends on Mg(2+) as a cofactor.

The catalysed reaction is GDP-alpha-D-mannose + H2O = alpha-D-mannose 1-phosphate + GMP + 2 H(+). In terms of biological role, nucleoside diphosphate sugar hydrolase that hydrolyzes GDP-mannose as its preferred substrate, yielding GMP and mannose-1-phosphate. The polypeptide is GDP-mannose pyrophosphatase (nudK) (Escherichia coli (strain K12 / DH10B)).